Consider the following 229-residue polypeptide: Small ribosomal subunit protein mS23 (229 aa).

This sequence belongs to the mitochondrion-specific ribosomal protein mS23 family. In terms of assembly, component of the mitochondrial small ribosomal subunit.

The protein localises to the mitochondrion. This is Small ribosomal subunit protein mS23 (RSM25) from Yarrowia lipolytica (strain CLIB 122 / E 150) (Yeast).